Here is a 201-residue protein sequence, read N- to C-terminus: Cysteine dioxygenase type 1 (201 aa).

Histidine 86, histidine 88, and histidine 141 together coordinate Fe cation. Residues 93 to 158 constitute a cross-link (3'-(S-cysteinyl)-tyrosine (Cys-Tyr)); sequence CFLKLLQGQL…TEPAVSLHLY (66 aa).

It belongs to the cysteine dioxygenase family. Monomer. Fe cation is required as a cofactor. Requires Ni(2+) as cofactor. It depends on Zn(2+) as a cofactor. In terms of processing, the thioether cross-link between Cys-93 and Tyr-158 plays a structural role through stabilizing the Fe(2+) ion, and prevents the production of highly damaging free hydroxyl radicals by holding the oxygen radical via hydroxyl hydrogen.

It catalyses the reaction L-cysteine + O2 = 3-sulfino-L-alanine + H(+). It functions in the pathway organosulfur biosynthesis; taurine biosynthesis; hypotaurine from L-cysteine: step 1/2. Catalyzes the oxidation of cysteine to cysteine sulfinic acid with addition of molecular dioxygen. The polypeptide is Cysteine dioxygenase type 1 (cdo1) (Danio rerio (Zebrafish)).